The following is a 2528-amino-acid chain: Squalestatin tetraketide synthase clz2 (2528 aa).

In terms of domain architecture, Ketosynthase family 3 (KS3) spans 14–409; sequence TVPIAIVGMS…GANAHVILES (396 aa). Residues Cys-187, His-291, and His-331 each act as for beta-ketoacyl synthase activity in the active site. Positions 420 to 457 are disordered; the sequence is VNGHHQKNGTTNGHKGANGTTNELNGTNGTANGHDITT. The segment covering 436-452 has biased composition (low complexity); the sequence is ANGTTNELNGTNGTANG. The malonyl-CoA:ACP transacylase (MAT) domain stretch occupies residues 538–856; it reads GAQWFAMGRE…PYLSCLLRGQ (319 aa). Positions 925–1063 are N-terminal hotdog fold; sequence HDLLGSLIPG…GRIAIELDTS (139 aa). The PKS/mFAS DH domain occupies 925-1239; it reads HDLLGSLIPG…NQSVGQIALQ (315 aa). The segment at 925-1239 is dehydratase (DH) domain; it reads HDLLGSLIPG…NQSVGQIALQ (315 aa). His-957 (proton acceptor; for dehydratase activity) is an active-site residue. The segment at 1083 to 1239 is C-terminal hotdog fold; sequence TRSVDPSNLY…NQSVGQIALQ (157 aa). Asp-1148 acts as the Proton donor; for dehydratase activity in catalysis. The interval 1390 to 1590 is methyltransferase (CMet) domain; that stretch reads LYRYYTDAIK…GLDVELRDCD (201 aa). The interval 1817–2130 is enoyl reductase (ER) (ER) domain; the sequence is GLIDTLQFSK…AGKHMGKIVI (314 aa). Positions 2153–2331 are ketoreductase (KR) domain; it reads ASYLIVGGLG…AVSIDLGMVQ (179 aa). Positions 2408–2430 are disordered; sequence RARDAKEQSNSQGGGTDSKISPG. The region spanning 2441–2518 is the Carrier domain; it reads EAIDVVGRAI…ALATTVATKS (78 aa). Ser-2478 bears the O-(pantetheine 4'-phosphoryl)serine mark.

Its pathway is secondary metabolite biosynthesis. Highly reducing polyketide synthase (HR-PKS); part of the gene cluster that mediates the biosynthesis of squalestatin S1 (SQS1, also known as zaragozic acid A), a heavily oxidized fungal polyketide that offers potent cholesterol lowering activity by targeting squalene synthase (SS). SQS1 is composed of a 2,8-dioxobicyclic[3.2.1]octane-3,4,5-tricarboxyclic acid core that is connected to two lipophilic polyketide arms. These initial steps feature the priming of an unusual benzoic acid starter unit onto the highly reducing polyketide synthase clz14, followed by oxaloacetate extension and product release to generate a tricarboxylic acid containing product. The phenylalanine ammonia lyase (PAL) clz10 and the acyl-CoA ligase clz12 are involved in transforming phenylalanine into benzoyl-CoA. The citrate synthase-like protein clz17 is involved in connecting the C-alpha-carbons of the hexaketide chain and oxaloacetate to afford the tricarboxylic acid unit. The potential hydrolytic enzymes, clz11 and clz13, are in close proximity to pks2 and may participate in product release. On the other side, the tetraketide arm is synthesized by a the squalestatin tetraketide synthase clz2 and enzymatically esterified to the core in the last biosynthetic step, by the acetyltransferase clz6. The biosynthesis of the tetraketide must involve 3 rounds of chain extension. After the first and second rounds methyl-transfer occurs, and in all rounds of extension the ketoreductase and dehydratase are active. The enoyl reductase and C-MeT of clz2 are not active in the final round of extension. The acetyltransferase clz6 appears to have a broad substrate selectivity for its acyl CoA substrate, allowing the in vitro synthesis of novel squalestatins. The biosynthesis of SQS1 requires several oxidative steps likely performed by oxidoreductases clz3, clz15 and clz16. Finally, in support of the identification of the cluster as being responsible for SQS1 production, the cluster contains a gene encoding a putative squalene synthase (SS) clz20, suggesting a likely mechanism for self-resistance. The sequence is that of Squalestatin tetraketide synthase clz2 from Cochliobolus lunatus (Filamentous fungus).